The primary structure comprises 346 residues: Propane 2-monooxygenase, reductase component (346 aa).

Residues 5–94 (HKISFEPVDI…DCEIELLNFD (90 aa)) form the 2Fe-2S ferredoxin-type domain. [2Fe-2S] cluster-binding residues include cysteine 39, cysteine 44, cysteine 46, and cysteine 78. The region spanning 104-205 (IQDVTTKVAA…NGPYGSCTLR (102 aa)) is the FAD-binding FR-type domain.

This sequence belongs to the bacterial ring-hydroxylating dioxygenase ferredoxin reductase family. The propane 2-monooxygenase multicomponent enzyme system is composed of an electron transfer component and a monooxygenase component interacting with the effector protein PrmD. The electron transfer component is composed of a reductase (PrmB), and the monooxygenase component is formed by a large subunit (PrmA) and a small subunit (PrmC). The cofactor is FAD. It depends on [2Fe-2S] cluster as a cofactor.

In terms of biological role, reductase component of the propane 2-monooxygenase multicomponent enzyme system which is involved in the degradation of propane via the O2-dependent hydroxylation of propane. Reductase catalyzes the transfer of electrons from NADH or NADPH to monooxygenase. The chain is Propane 2-monooxygenase, reductase component from Gordonia sp. (strain TY-5).